A 415-amino-acid chain; its full sequence is Gamma-glutamyl phosphate reductase (415 aa).

Belongs to the gamma-glutamyl phosphate reductase family.

It localises to the cytoplasm. It catalyses the reaction L-glutamate 5-semialdehyde + phosphate + NADP(+) = L-glutamyl 5-phosphate + NADPH + H(+). It functions in the pathway amino-acid biosynthesis; L-proline biosynthesis; L-glutamate 5-semialdehyde from L-glutamate: step 2/2. Functionally, catalyzes the NADPH-dependent reduction of L-glutamate 5-phosphate into L-glutamate 5-semialdehyde and phosphate. The product spontaneously undergoes cyclization to form 1-pyrroline-5-carboxylate. The sequence is that of Gamma-glutamyl phosphate reductase from Bacillus velezensis (strain DSM 23117 / BGSC 10A6 / LMG 26770 / FZB42) (Bacillus amyloliquefaciens subsp. plantarum).